A 156-amino-acid chain; its full sequence is Ribosomal RNA large subunit methyltransferase H (156 aa).

S-adenosyl-L-methionine contacts are provided by residues leucine 73, glycine 104, and 123–128; that span reads LSALTL.

Belongs to the RNA methyltransferase RlmH family. In terms of assembly, homodimer.

The protein localises to the cytoplasm. It catalyses the reaction pseudouridine(1915) in 23S rRNA + S-adenosyl-L-methionine = N(3)-methylpseudouridine(1915) in 23S rRNA + S-adenosyl-L-homocysteine + H(+). In terms of biological role, specifically methylates the pseudouridine at position 1915 (m3Psi1915) in 23S rRNA. The sequence is that of Ribosomal RNA large subunit methyltransferase H from Vibrio vulnificus (strain CMCP6).